The primary structure comprises 79 residues: MGGLQPWHWVIVIAVFVLLFGAKKLPDAARSLGKSMRIFKSEIKEMQSEGKSDNPPATPITSERVDTNPTAEQPDKRSA.

A helical membrane pass occupies residues 1–21; that stretch reads MGGLQPWHWVIVIAVFVLLFG. The segment covering 43 to 52 has biased composition (basic and acidic residues); the sequence is IKEMQSEGKS. Residues 43-79 are disordered; it reads IKEMQSEGKSDNPPATPITSERVDTNPTAEQPDKRSA.

It belongs to the TatA/E family. As to quaternary structure, the Tat system comprises two distinct complexes: a TatABC complex, containing multiple copies of TatA, TatB and TatC subunits, and a separate TatA complex, containing only TatA subunits. Substrates initially bind to the TatABC complex, which probably triggers association of the separate TatA complex to form the active translocon.

The protein localises to the cell membrane. Functionally, part of the twin-arginine translocation (Tat) system that transports large folded proteins containing a characteristic twin-arginine motif in their signal peptide across membranes. TatA could form the protein-conducting channel of the Tat system. The protein is Sec-independent protein translocase protein TatA of Mycobacterium sp. (strain JLS).